The chain runs to 85 residues: Small ribosomal subunit protein bS18 (85 aa).

The protein belongs to the bacterial ribosomal protein bS18 family. In terms of assembly, part of the 30S ribosomal subunit. Forms a tight heterodimer with protein bS6.

In terms of biological role, binds as a heterodimer with protein bS6 to the central domain of the 16S rRNA, where it helps stabilize the platform of the 30S subunit. The chain is Small ribosomal subunit protein bS18 from Hamiltonella defensa subsp. Acyrthosiphon pisum (strain 5AT).